Reading from the N-terminus, the 338-residue chain is Glycerol-3-phosphate dehydrogenase [NAD(P)+] (338 aa).

NADPH contacts are provided by Trp11, Arg30, and Lys107. Positions 107, 140, and 142 each coordinate sn-glycerol 3-phosphate. Ala144 lines the NADPH pocket. Sn-glycerol 3-phosphate is bound by residues Lys195, Asp248, Ser258, Arg259, and Asn260. Lys195 serves as the catalytic Proton acceptor. Arg259 contacts NADPH. The NADPH site is built by Val283 and Glu285.

Belongs to the NAD-dependent glycerol-3-phosphate dehydrogenase family.

It is found in the cytoplasm. The enzyme catalyses sn-glycerol 3-phosphate + NAD(+) = dihydroxyacetone phosphate + NADH + H(+). The catalysed reaction is sn-glycerol 3-phosphate + NADP(+) = dihydroxyacetone phosphate + NADPH + H(+). It functions in the pathway membrane lipid metabolism; glycerophospholipid metabolism. Functionally, catalyzes the reduction of the glycolytic intermediate dihydroxyacetone phosphate (DHAP) to sn-glycerol 3-phosphate (G3P), the key precursor for phospholipid synthesis. This chain is Glycerol-3-phosphate dehydrogenase [NAD(P)+], found in Ralstonia nicotianae (strain ATCC BAA-1114 / GMI1000) (Ralstonia solanacearum).